Reading from the N-terminus, the 900-residue chain is Translation initiation factor IF-2 (900 aa).

Composition is skewed to basic and acidic residues over residues 119-158, 165-191, and 198-229; these read AAKA…EKQE, ADEK…KADA, and EEAR…DHHV. The segment at 119–306 is disordered; that stretch reads AAKAEAEAKA…NARSVAPESM (188 aa). Over residues 257 to 272 the composition is skewed to low complexity; the sequence is SANAGNNANSNSNAGS. A tr-type G domain is found at 400 to 569; the sequence is PRAPVVTIMG…LLESEVLELK (170 aa). Positions 409 to 416 are G1; sequence GHVDHGKT. Residue 409-416 coordinates GTP; it reads GHVDHGKT. The interval 434-438 is G2; sequence GITQH. The G3 stretch occupies residues 455-458; the sequence is DTPG. GTP-binding positions include 455–459 and 509–512; these read DTPGH and NKID. The G4 stretch occupies residues 509–512; the sequence is NKID. Positions 545–547 are G5; the sequence is SAK.

The protein belongs to the TRAFAC class translation factor GTPase superfamily. Classic translation factor GTPase family. IF-2 subfamily.

It localises to the cytoplasm. Its function is as follows. One of the essential components for the initiation of protein synthesis. Protects formylmethionyl-tRNA from spontaneous hydrolysis and promotes its binding to the 30S ribosomal subunits. Also involved in the hydrolysis of GTP during the formation of the 70S ribosomal complex. The polypeptide is Translation initiation factor IF-2 (Shewanella piezotolerans (strain WP3 / JCM 13877)).